The sequence spans 198 residues: Ribonuclease HII (198 aa).

Residues 2–192 (MYYCGIDEAG…IKKIIDNQKN (191 aa)) form the RNase H type-2 domain. Residues D8, E9, and D101 each contribute to the a divalent metal cation site.

It belongs to the RNase HII family. Requires Mn(2+) as cofactor. It depends on Mg(2+) as a cofactor.

The protein localises to the cytoplasm. The catalysed reaction is Endonucleolytic cleavage to 5'-phosphomonoester.. Endonuclease that specifically degrades the RNA of RNA-DNA hybrids. This is Ribonuclease HII from Natranaerobius thermophilus (strain ATCC BAA-1301 / DSM 18059 / JW/NM-WN-LF).